The following is an 883-amino-acid chain: Chromatin structure-remodeling complex protein RSC30 (883 aa).

The segment at residues 14 to 45 (ACTQCRKRKIGCDRAKPICGNCVKYNKPDCFY) is a DNA-binding region (zn(2)-C6 fungal-type). Disordered regions lie at residues 121–157 (QNNNTNNNTAPRQNSSTVSSNVHGNTIVRSDSPDVPS) and 241–273 (NTTANKINKTGENSKKGKVDGKRAGFDHQTSRT). The span at 130–149 (APRQNSSTVSSNVHGNTIVR) shows a compositional bias: polar residues. Serine 150 is modified (phosphoserine). A compositionally biased stretch (polar residues) spans 241–251 (NTTANKINKTG). The segment covering 252-270 (ENSKKGKVDGKRAGFDHQT) has biased composition (basic and acidic residues).

Forms a heteromer with RSC3. Interacts with NPL6. Component of the two forms of the RSC complex composed of at least either RSC1 or RSC2, and ARP7, ARP9, LDB7, NPL6, RSC3, RSC30, RSC4, RSC58, RSC6, RSC8, RSC9, SFH1, STH1, HTL1 and probably RTT102. The complexes interact with histone and histone variant components of centromeric chromatin. Component of a fungal-specific module (HTL1-LDB7-NPL6-RSC3-RSC30) within the RSC complex.

The protein localises to the nucleus. Functionally, component of the chromatin structure-remodeling complex (RSC), which is involved in transcription regulation and nucleosome positioning. RSC is responsible for the transfer of a histone octamer from a nucleosome core particle to naked DNA. The reaction requires ATP and involves an activated RSC-nucleosome intermediate. Remodeling reaction also involves DNA translocation, DNA twist and conformational change. As a reconfigurer of centromeric and flanking nucleosomes, RSC complex is required both for proper kinetochore function in chromosome segregation and, via a PKC1-dependent signaling pathway, for organization of the cellular cytoskeleton. This subunit is required for transcription of ribosomal protein genes and genes involved in the integrity of the cell wall. Together with HTL1, LDB7, NPL6, RSC3 components, defines a fungal-specific module within the RSC complex that plays a role in many cellular functions including the maintenance of cell wall integrity. The chain is Chromatin structure-remodeling complex protein RSC30 (RSC30) from Saccharomyces cerevisiae (strain ATCC 204508 / S288c) (Baker's yeast).